A 110-amino-acid chain; its full sequence is U1-lycotoxin-Ls1aa (110 aa).

Residues 1–20 (MKFVLLFGVLLVTLFSYSSA) form the signal peptide. A propeptide spanning residues 21–44 (EMLDDFDQADEDELLSLIEKEEAR) is cleaved from the precursor. Disulfide bonds link C47/C62, C54/C71, C61/C89, and C73/C87.

Belongs to the neurotoxin 19 (CSTX) family. 03 subfamily. Expressed by the venom gland.

It localises to the secreted. The protein is U1-lycotoxin-Ls1aa of Lycosa singoriensis (Wolf spider).